A 211-amino-acid chain; its full sequence is Probable GTP-binding protein EngB (211 aa).

The EngB-type G domain maps to 13-188 (SGYEIAFAGR…ASVMAGRLHF (176 aa)). Residues 21–28 (GRSNAGKS), 48–52 (GRTQM), 67–70 (DLPG), 134–137 (TKAD), and 167–169 (FSS) each bind GTP. Residues Ser28 and Thr50 each contribute to the Mg(2+) site.

It belongs to the TRAFAC class TrmE-Era-EngA-EngB-Septin-like GTPase superfamily. EngB GTPase family. Mg(2+) is required as a cofactor.

Necessary for normal cell division and for the maintenance of normal septation. In Acinetobacter baumannii (strain ATCC 17978 / DSM 105126 / CIP 53.77 / LMG 1025 / NCDC KC755 / 5377), this protein is Probable GTP-binding protein EngB.